The chain runs to 529 residues: Basal body-orientation factor 1 (529 aa).

The segment covering 1-13 (MPSKGKDKKKGKS) has biased composition (basic residues). Residues 1-22 (MPSKGKDKKKGKSRGKDTKKLI) are disordered. 2 coiled-coil regions span residues 55 to 198 (DTSR…LKQE) and 271 to 361 (IKEK…EVER). Positions 510–529 (GKVVLPTIPKGPQESDTGTF) are disordered.

The protein belongs to the BBOF1 family. As to quaternary structure, interacts with MNS1 and ODF2.

The protein localises to the cytoplasm. Its subcellular location is the cytoskeleton. It is found in the cilium basal body. The protein resides in the flagellum axoneme. Plays an essential role in sperm motility and male fertility by stabilizing the sperm flagellar axonemal structure. May be required for the stability of ODF2 and MANS1 proteins. Dispensable for the assembly and function of motile cilia. In Macaca fascicularis (Crab-eating macaque), this protein is Basal body-orientation factor 1.